Consider the following 210-residue polypeptide: MSKTSESKQMAVLRFIYERVNEKGYPPTVREIGEAVDLSSTSTVHGHISRLEKKGYIQKDPTKPRAIEVTPAGFEALGVETTPHQIPVLGTVTAGQPILAVQEATDYFPIPKELESFGGDLFMLTIRGESMINIGIMNGDQVIVRRQSSADNGDIIIAMTDENEATCKRFFKEADHYRLQPENDTMAPIILNNVSVLGKVVGLYRDMLFQ.

The segment at residues 29-49 (VREIGEAVDLSSTSTVHGHIS) is a DNA-binding region (H-T-H motif). Catalysis depends on for autocatalytic cleavage activity residues Ser130 and Lys168.

The protein belongs to the peptidase S24 family. Homodimer.

The catalysed reaction is Hydrolysis of Ala-|-Gly bond in repressor LexA.. Represses a number of genes involved in the response to DNA damage (SOS response), including recA and lexA. In the presence of single-stranded DNA, RecA interacts with LexA causing an autocatalytic cleavage which disrupts the DNA-binding part of LexA, leading to derepression of the SOS regulon and eventually DNA repair. The chain is LexA repressor from Lactiplantibacillus plantarum (strain ATCC BAA-793 / NCIMB 8826 / WCFS1) (Lactobacillus plantarum).